We begin with the raw amino-acid sequence, 355 residues long: Probable butyrate kinase (355 aa).

The protein belongs to the acetokinase family.

It is found in the cytoplasm. It carries out the reaction butanoate + ATP = butanoyl phosphate + ADP. This is Probable butyrate kinase from Clostridium botulinum (strain Alaska E43 / Type E3).